The primary structure comprises 159 residues: MSQFTHINASGEANMVDVSAKAETVREARAEAFVQMSAETLELIVSGSHHKGDVFATARIAGIQAAKKTWDLIPLCHPLLLTKVEVQLEAIESENKVRIESVCKLAGKTGVEMEALTAASVAALTIYDMCKAVQKDIVIENVRLLEKTGGKSGHFKVES.

Residues 75 to 77 (LCH) and 113 to 114 (ME) contribute to the substrate site. The active site involves Asp128.

The protein belongs to the MoaC family. In terms of assembly, homohexamer; trimer of dimers.

The enzyme catalyses (8S)-3',8-cyclo-7,8-dihydroguanosine 5'-triphosphate = cyclic pyranopterin phosphate + diphosphate. The protein operates within cofactor biosynthesis; molybdopterin biosynthesis. Its function is as follows. Catalyzes the conversion of (8S)-3',8-cyclo-7,8-dihydroguanosine 5'-triphosphate to cyclic pyranopterin monophosphate (cPMP). The protein is Cyclic pyranopterin monophosphate synthase of Vibrio atlanticus (strain LGP32) (Vibrio splendidus (strain Mel32)).